We begin with the raw amino-acid sequence, 237 residues long: tRNA1(Val) (adenine(37)-N6)-methyltransferase (237 aa).

The protein belongs to the methyltransferase superfamily. tRNA (adenine-N(6)-)-methyltransferase family.

It localises to the cytoplasm. It carries out the reaction adenosine(37) in tRNA1(Val) + S-adenosyl-L-methionine = N(6)-methyladenosine(37) in tRNA1(Val) + S-adenosyl-L-homocysteine + H(+). Specifically methylates the adenine in position 37 of tRNA(1)(Val) (anticodon cmo5UAC). The sequence is that of tRNA1(Val) (adenine(37)-N6)-methyltransferase from Bacteroides fragilis (strain ATCC 25285 / DSM 2151 / CCUG 4856 / JCM 11019 / LMG 10263 / NCTC 9343 / Onslow / VPI 2553 / EN-2).